Here is a 499-residue protein sequence, read N- to C-terminus: Glutamyl-tRNA(Gln) amidotransferase subunit A (499 aa).

Residues Lys79 and Ser159 each act as charge relay system in the active site. Ser183 serves as the catalytic Acyl-ester intermediate.

The protein belongs to the amidase family. GatA subfamily. In terms of assembly, heterotrimer of A, B and C subunits.

It carries out the reaction L-glutamyl-tRNA(Gln) + L-glutamine + ATP + H2O = L-glutaminyl-tRNA(Gln) + L-glutamate + ADP + phosphate + H(+). Functionally, allows the formation of correctly charged Gln-tRNA(Gln) through the transamidation of misacylated Glu-tRNA(Gln) in organisms which lack glutaminyl-tRNA synthetase. The reaction takes place in the presence of glutamine and ATP through an activated gamma-phospho-Glu-tRNA(Gln). The polypeptide is Glutamyl-tRNA(Gln) amidotransferase subunit A (Granulibacter bethesdensis (strain ATCC BAA-1260 / CGDNIH1)).